We begin with the raw amino-acid sequence, 295 residues long: UTP--glucose-1-phosphate uridylyltransferase (295 aa).

The protein belongs to the UDPGP type 2 family.

The catalysed reaction is alpha-D-glucose 1-phosphate + UTP + H(+) = UDP-alpha-D-glucose + diphosphate. Functionally, may play a role in stationary phase survival. In Haemophilus influenzae (strain ATCC 51907 / DSM 11121 / KW20 / Rd), this protein is UTP--glucose-1-phosphate uridylyltransferase (galU).